We begin with the raw amino-acid sequence, 226 residues long: Small ribosomal subunit protein uS3 (226 aa).

The KH type-2 domain occupies 39 to 107; the sequence is VRKFLNKELR…PAQINISEVR (69 aa).

The protein belongs to the universal ribosomal protein uS3 family. Part of the 30S ribosomal subunit. Forms a tight complex with proteins S10 and S14.

Its function is as follows. Binds the lower part of the 30S subunit head. Binds mRNA in the 70S ribosome, positioning it for translation. This is Small ribosomal subunit protein uS3 from Idiomarina loihiensis (strain ATCC BAA-735 / DSM 15497 / L2-TR).